A 242-amino-acid polypeptide reads, in one-letter code: ATP synthase subunit b 2 (242 aa).

The helical transmembrane segment at 4–24 threads the bilayer; sequence LLAISSLTLLASLVLLVVSPA. The disordered stretch occupies residues 43-74; the sequence is ADSEDGDHDHDHEGDDHGHDEAAGDEHGHGDG. Over residues 49–74 the composition is skewed to basic and acidic residues; the sequence is DHDHDHEGDDHGHDEAAGDEHGHGDG.

Belongs to the ATPase B chain family. As to quaternary structure, F-type ATPases have 2 components, F(1) - the catalytic core - and F(0) - the membrane proton channel. F(1) has five subunits: alpha(3), beta(3), gamma(1), delta(1), epsilon(1). F(0) has three main subunits: a(1), b(2) and c(10-14). The alpha and beta chains form an alternating ring which encloses part of the gamma chain. F(1) is attached to F(0) by a central stalk formed by the gamma and epsilon chains, while a peripheral stalk is formed by the delta and b chains.

The protein localises to the cell inner membrane. Functionally, f(1)F(0) ATP synthase produces ATP from ADP in the presence of a proton or sodium gradient. F-type ATPases consist of two structural domains, F(1) containing the extramembraneous catalytic core and F(0) containing the membrane proton channel, linked together by a central stalk and a peripheral stalk. During catalysis, ATP synthesis in the catalytic domain of F(1) is coupled via a rotary mechanism of the central stalk subunits to proton translocation. Its function is as follows. Component of the F(0) channel, it forms part of the peripheral stalk, linking F(1) to F(0). The protein is ATP synthase subunit b 2 of Rhodopirellula baltica (strain DSM 10527 / NCIMB 13988 / SH1).